A 903-amino-acid polypeptide reads, in one-letter code: Centrobin (903 aa).

Positions 1 to 10 (MATSADSPSS) are enriched in polar residues. Residues 1 to 34 (MATSADSPSSPLGAEDLLSDSSEPPGLNQVSSEV) form a disordered region. The residue at position 80 (Ser-80) is a Phosphoserine. 6 disordered regions span residues 110–140 (LQTSRDTAYRDPLIPGAGSERREEDSFDSDS), 471–493 (LRQAASLREHHRKQLQDLSGQHQ), 568–597 (LSTTLPPPNPPAPPAGPSSPGPQEPEKEER), 669–704 (SALGAFHPDHRAERPFPEEDPGPDGEGLLKQGLPPA), 772–799 (RVPEPPSSHSQGSGPSSGSPERGGDGLT), and 837–903 (SGTD…GVWR). A coiled-coil region spans residues 196–560 (RRKHCERHIQ…ERLQAMLQAH (365 aa)). The interval 365 to 903 (QEHQLKEHYQ…SMRSRGGVWR (539 aa)) is required for centrosome localization. A compositionally biased stretch (pro residues) spans 572–590 (LPPPNPPAPPAGPSSPGPQ). Residues 675-685 (HPDHRAERPFP) are compositionally biased toward basic and acidic residues. Positions 778–791 (SSHSQGSGPSSGSP) are enriched in low complexity. Position 790 is a phosphoserine (Ser-790). Basic and acidic residues predominate over residues 837-863 (SGTDGRGDNVPRRNTDSRLGEIPRKEI).

As to quaternary structure, interacts with LYST. As to expression, widely expressed (at protein level). Highly expressed in testis. Also expressed in spleen, thymus, prostate, small intestine, colon and peripheral blood leukocytes.

It is found in the cytoplasm. Its subcellular location is the cytoskeleton. The protein localises to the microtubule organizing center. The protein resides in the centrosome. It localises to the centriole. Functionally, required for centriole duplication. Inhibition of centriole duplication leading to defects in cytokinesis. This chain is Centrobin (CNTROB), found in Homo sapiens (Human).